The sequence spans 574 residues: Proline--tRNA ligase (574 aa).

It belongs to the class-II aminoacyl-tRNA synthetase family. ProS type 1 subfamily. In terms of assembly, homodimer.

The protein localises to the cytoplasm. It carries out the reaction tRNA(Pro) + L-proline + ATP = L-prolyl-tRNA(Pro) + AMP + diphosphate. Catalyzes the attachment of proline to tRNA(Pro) in a two-step reaction: proline is first activated by ATP to form Pro-AMP and then transferred to the acceptor end of tRNA(Pro). As ProRS can inadvertently accommodate and process non-cognate amino acids such as alanine and cysteine, to avoid such errors it has two additional distinct editing activities against alanine. One activity is designated as 'pretransfer' editing and involves the tRNA(Pro)-independent hydrolysis of activated Ala-AMP. The other activity is designated 'posttransfer' editing and involves deacylation of mischarged Ala-tRNA(Pro). The misacylated Cys-tRNA(Pro) is not edited by ProRS. This Ralstonia nicotianae (strain ATCC BAA-1114 / GMI1000) (Ralstonia solanacearum) protein is Proline--tRNA ligase.